We begin with the raw amino-acid sequence, 358 residues long: MPAVLSSVLSNITDFVVHEGNGVKGLADMGLQSLPKQYIQPAEERITTSTVIVDDTIPVIDLSEWGSDPKVGDLICEAAEKWGFFQIVNHGVPLEVLEEVKAATYRFFRLPAEEKNKHSKDNSPSNNVRYGTSFTPHAEKALEWKDFLSLFYVSDEEAAALWPSACRDEALTFMRNCDAVIKRLLKSLMKGLNVTEIDGTKESLLMGSKRINMNYYPKCPNPELTVGVGRHSDVSTLTILLQDQIGGLYVRKLDSDTWVHVPPINGAIVINVGDALQILSNGRYKSIEHRVIANGSNNRISVPIFVNPRPNDIIGPLPELLESGEKAVYKNVLYSDYVKHFFRKAHDGKETVDFAKIN.

The Fe2OG dioxygenase domain occupies 200 to 308 (TKESLLMGSK…RISVPIFVNP (109 aa)). Residue tyrosine 216 coordinates 2-oxoglutarate. Residues histidine 231, aspartate 233, and histidine 289 each coordinate Fe cation. 2-oxoglutarate contacts are provided by arginine 299 and serine 301.

It belongs to the iron/ascorbate-dependent oxidoreductase family. L-ascorbate is required as a cofactor. It depends on Fe(2+) as a cofactor. As to expression, mostly expressed in tubers, and, at low levels, in underground stems, stems, leaves and petioles.

The catalysed reaction is (E)-feruloyl-CoA + 2-oxoglutarate + O2 = (E)-6-hydroxyferuloyl-CoA + succinate + CO2. It functions in the pathway phenylpropanoid metabolism. Functionally, 2-oxoglutarate (OG)- and Fe(II)-dependent dioxygenase (2OGD) involved in scopoletin biosynthesis. Converts feruloyl CoA into 6'-hydroxyferuloyl CoA, and, at low efficiency, caffeoyl-CoA into 6'-hydroxycaffeate, but has no activity with p-coumaroyl-CoA. The polypeptide is Feruloyl CoA ortho-hydroxylase F6H1-3 (Ipomoea batatas (Sweet potato)).